We begin with the raw amino-acid sequence, 550 residues long: Iduronate 2-sulfatase (550 aa).

The signal sequence occupies residues 1–25 (MPPPRTGRGLLWLGLVLSSVCVALG). The propeptide occupies 26–33 (SETQANST). Residues aspartate 45, aspartate 46, and cysteine 84 each contribute to the Ca(2+) site. Cysteine 84 acts as the Nucleophile in catalysis. Position 84 is a 3-oxoalanine (Cys) (cysteine 84). The N-linked (GlcNAc...) asparagine glycan is linked to asparagine 115. Histidine 138 is an active-site residue. The N-linked (GlcNAc...) asparagine glycan is linked to asparagine 144. A disulfide bridge links cysteine 171 with cysteine 184. N-linked (GlcNAc...) asparagine glycosylation is found at asparagine 246, asparagine 280, and asparagine 325. Aspartate 334 and histidine 335 together coordinate Ca(2+). The cysteines at positions 422 and 432 are disulfide-linked. 2 N-linked (GlcNAc...) asparagine glycosylation sites follow: asparagine 513 and asparagine 537.

It belongs to the sulfatase family. As to quaternary structure, monomer. The 58-kDa mature form is composed of two chains resulting from proteolitic processing, the 42-kDa chain and the 14-kDa chain that remain stably associated and form the 58-kDa intermediate form which is enzymatically active. Ca(2+) serves as cofactor. In terms of processing, synthesized as a 75-kDa precursor form in the endoplasmic reticulum (ER), and then processed by proteolytic cleavage through various intermediates to yield a 55-kDa mature form, with the release of an 18 kDa polypeptide. Post-translationally, the conversion to 3-oxoalanine (also known as C-formylglycine, FGly), of a serine or cysteine residue in prokaryotes and of a cysteine residue in eukaryotes, is critical for catalytic activity. Liver, kidney, lung, and placenta.

It is found in the lysosome. The catalysed reaction is Hydrolysis of the 2-sulfate groups of the L-iduronate 2-sulfate units of dermatan sulfate, heparan sulfate and heparin.. Lysosomal enzyme involved in the degradation pathway of dermatan sulfate and heparan sulfate. The sequence is that of Iduronate 2-sulfatase (IDS) from Homo sapiens (Human).